Consider the following 43-residue polypeptide: Protein PsbN (43 aa).

The chain crosses the membrane as a helical span at residues 5 to 27 (TLVAISISGSLVSFTGYALYTAF).

The protein belongs to the PsbN family.

Its subcellular location is the plastid. The protein localises to the chloroplast thylakoid membrane. In terms of biological role, may play a role in photosystem I and II biogenesis. This Drimys granadensis protein is Protein PsbN.